The chain runs to 309 residues: Ribonuclease Z (309 aa).

Residues His-63, His-65, Asp-67, His-68, His-145, Asp-216, and His-274 each contribute to the Zn(2+) site. The active-site Proton acceptor is the Asp-67.

Belongs to the RNase Z family. In terms of assembly, homodimer. Zn(2+) is required as a cofactor.

The enzyme catalyses Endonucleolytic cleavage of RNA, removing extra 3' nucleotides from tRNA precursor, generating 3' termini of tRNAs. A 3'-hydroxy group is left at the tRNA terminus and a 5'-phosphoryl group is left at the trailer molecule.. In terms of biological role, zinc phosphodiesterase, which displays some tRNA 3'-processing endonuclease activity. Probably involved in tRNA maturation, by removing a 3'-trailer from precursor tRNA. This Streptococcus pyogenes serotype M6 (strain ATCC BAA-946 / MGAS10394) protein is Ribonuclease Z.